We begin with the raw amino-acid sequence, 630 residues long: Peptidyl-prolyl cis-trans isomerase cyp15 (630 aa).

The interval 1-46 is disordered; the sequence is MPEDSNTNDNNKRPLEDNNAVDGESDDDIGPMLPPPPGEDAPRKKK. 5 WD repeats span residues 70 to 108, 113 to 152, 157 to 198, 203 to 242, and 258 to 301; these read MHRD…IEFV, SHLS…MINM, YKPK…KPLH, MHSK…ALPD, and RKKK…REYD. Positions 475 to 629 constitute a PPIase cyclophilin-type domain; it reads LGTSAIIRTT…DDIKIINIDI (155 aa).

It belongs to the cyclophilin-type PPIase family.

It catalyses the reaction [protein]-peptidylproline (omega=180) = [protein]-peptidylproline (omega=0). Functionally, PPIases accelerate the folding of proteins. It catalyzes the cis-trans isomerization of proline imidic peptide bonds in oligopeptides. In Rhizopus delemar (strain RA 99-880 / ATCC MYA-4621 / FGSC 9543 / NRRL 43880) (Mucormycosis agent), this protein is Peptidyl-prolyl cis-trans isomerase cyp15 (cyp15).